The sequence spans 545 residues: Chaperonin GroEL 2 (545 aa).

ATP contacts are provided by residues 29–32, 86–90, glycine 413, 479–481, and aspartate 495; these read TLGP, DGTTT, and NAA.

The protein belongs to the chaperonin (HSP60) family. Forms a cylinder of 14 subunits composed of two heptameric rings stacked back-to-back. Interacts with the co-chaperonin GroES.

It is found in the cytoplasm. It carries out the reaction ATP + H2O + a folded polypeptide = ADP + phosphate + an unfolded polypeptide.. Functionally, together with its co-chaperonin GroES, plays an essential role in assisting protein folding. The GroEL-GroES system forms a nano-cage that allows encapsulation of the non-native substrate proteins and provides a physical environment optimized to promote and accelerate protein folding. The polypeptide is Chaperonin GroEL 2 (Prochlorococcus marinus (strain SARG / CCMP1375 / SS120)).